Consider the following 218-residue polypeptide: uncharacterized protein (218 aa).

One can recognise a CN hydrolase domain in the interval 4–207; the sequence is WKVAAAQYEP…SLLLVGQRSS (204 aa).

This is an uncharacterized protein from Escherichia coli (strain K12).